Consider the following 557-residue polypeptide: Carbamoyl phosphate synthase large chain, N-terminal section (557 aa).

The tract at residues 1-402 (MPKRTDIKKI…ALLKAVRSLE (402 aa)) is carboxyphosphate synthetic domain. Arg129, Arg169, Gly175, Gly176, Lys208, Leu210, Glu215, Gly241, Val242, His243, Gln285, and Glu299 together coordinate ATP. The ATP-grasp domain occupies 133-328 (KETMESIGLK…IAKVAAKLAV (196 aa)). Mg(2+) contacts are provided by Gln285, Glu299, and Asn301. Positions 285, 299, and 301 each coordinate Mn(2+). The tract at residues 403 to 553 (LDRYGLAFPK…PYYTVDGQEI (151 aa)) is oligomerization domain.

The protein belongs to the CarB family. Composed of two chains; the small (or glutamine) chain promotes the hydrolysis of glutamine to ammonia, which is used by the large (or ammonia) chain to synthesize carbamoyl phosphate. Tetramer of heterodimers (alpha,beta)4. It depends on Mg(2+) as a cofactor. The cofactor is Mn(2+).

It catalyses the reaction hydrogencarbonate + L-glutamine + 2 ATP + H2O = carbamoyl phosphate + L-glutamate + 2 ADP + phosphate + 2 H(+). The catalysed reaction is hydrogencarbonate + NH4(+) + 2 ATP = carbamoyl phosphate + 2 ADP + phosphate + 2 H(+). It participates in amino-acid biosynthesis; L-arginine biosynthesis; carbamoyl phosphate from bicarbonate: step 1/1. Its pathway is pyrimidine metabolism; UMP biosynthesis via de novo pathway; (S)-dihydroorotate from bicarbonate: step 1/3. Functionally, large subunit of the glutamine-dependent carbamoyl phosphate synthetase (CPSase). CPSase catalyzes the formation of carbamoyl phosphate from the ammonia moiety of glutamine, carbonate, and phosphate donated by ATP, constituting the first step of 2 biosynthetic pathways, one leading to arginine and/or urea and the other to pyrimidine nucleotides. The large subunit (synthetase) binds the substrates ammonia (free or transferred from glutamine from the small subunit), hydrogencarbonate and ATP and carries out an ATP-coupled ligase reaction, activating hydrogencarbonate by forming carboxy phosphate which reacts with ammonia to form carbamoyl phosphate. The polypeptide is Carbamoyl phosphate synthase large chain, N-terminal section (carB1) (Aquifex aeolicus (strain VF5)).